The chain runs to 562 residues: Protein FAM83D-A (562 aa).

Positions 424-471 (ITTQTTETSQCTTQTPAPTSSVARLSNSSNSSSSSFSSTSITSTGSNC) are disordered. Low complexity predominate over residues 425 to 471 (TTQTTETSQCTTQTPAPTSSVARLSNSSNSSSSSFSSTSITSTGSNC).

It belongs to the FAM83 family.

It localises to the cytoplasm. Its subcellular location is the cytoskeleton. The protein localises to the spindle. The protein resides in the spindle pole. Functionally, may regulate cell proliferation, growth, migration and epithelial to mesenchymal transition. May also be important for proper chromosome congression and alignment during mitosis. This Xenopus laevis (African clawed frog) protein is Protein FAM83D-A.